A 452-amino-acid chain; its full sequence is Pup--protein ligase 1 (452 aa).

Residue Glu-9 participates in Mg(2+) binding. ATP is bound at residue Arg-53. Tyr-55 is a Mg(2+) binding site. Asp-57 functions as the Proton acceptor in the catalytic mechanism. Glu-63 contacts Mg(2+). Residues Thr-66 and Trp-419 each contribute to the ATP site.

It belongs to the Pup ligase/Pup deamidase family. Pup-conjugating enzyme subfamily.

It carries out the reaction ATP + [prokaryotic ubiquitin-like protein]-L-glutamate + [protein]-L-lysine = ADP + phosphate + N(6)-([prokaryotic ubiquitin-like protein]-gamma-L-glutamyl)-[protein]-L-lysine.. It functions in the pathway protein degradation; proteasomal Pup-dependent pathway. Its pathway is protein modification; protein pupylation. Its function is as follows. Catalyzes the covalent attachment of the prokaryotic ubiquitin-like protein modifier Pup to the proteasomal substrate proteins, thereby targeting them for proteasomal degradation. This tagging system is termed pupylation. The ligation reaction involves the side-chain carboxylate of the C-terminal glutamate of Pup and the side-chain amino group of a substrate lysine. This is Pup--protein ligase 1 from Rhodococcus erythropolis (Arthrobacter picolinophilus).